The following is a 318-amino-acid chain: Aspartate carbamoyltransferase catalytic subunit (318 aa).

R59 and T60 together coordinate carbamoyl phosphate. Residue K87 participates in L-aspartate binding. Carbamoyl phosphate-binding residues include R109, H137, and Q140. Positions 170 and 224 each coordinate L-aspartate. 2 residues coordinate carbamoyl phosphate: G265 and P266.

It belongs to the aspartate/ornithine carbamoyltransferase superfamily. ATCase family. In terms of assembly, heterododecamer (2C3:3R2) of six catalytic PyrB chains organized as two trimers (C3), and six regulatory PyrI chains organized as three dimers (R2).

It catalyses the reaction carbamoyl phosphate + L-aspartate = N-carbamoyl-L-aspartate + phosphate + H(+). It participates in pyrimidine metabolism; UMP biosynthesis via de novo pathway; (S)-dihydroorotate from bicarbonate: step 2/3. Catalyzes the condensation of carbamoyl phosphate and aspartate to form carbamoyl aspartate and inorganic phosphate, the committed step in the de novo pyrimidine nucleotide biosynthesis pathway. This is Aspartate carbamoyltransferase catalytic subunit from Rhizobium rhizogenes (strain K84 / ATCC BAA-868) (Agrobacterium radiobacter).